The chain runs to 348 residues: Probable mitochondrial adenine nucleotide transporter BTL1 (348 aa).

Solcar repeat units follow at residues 46 to 129, 157 to 241, and 251 to 338; these read SREA…VKRA, SWIS…MKTS, and LSRP…WKDI. Helical transmembrane passes span 52–72, 104–124, 156–176, 213–233, 256–276, and 321–341; these read FLSGALAGAMTKAVLAPLETI, GNEINMIRIIPTQAIELGTFE, ISWISPVAVAGASAGIASTLV, FYAGLGPTLVGMLPYSTCYYF, MLVLGALAGLTASTISFPLEV, and VMPSSGITWVFYEAWKDILLA.

This sequence belongs to the mitochondrial carrier (TC 2.A.29) family.

It is found in the mitochondrion inner membrane. Probable mitochondrial adenylate carrier that catalyzes the transport of ATP, ADP and AMP. The polypeptide is Probable mitochondrial adenine nucleotide transporter BTL1 (Arabidopsis thaliana (Mouse-ear cress)).